The primary structure comprises 238 residues: Pyridoxine 5'-phosphate synthase (238 aa).

N9 contacts 3-amino-2-oxopropyl phosphate. Position 11-12 (11-12) interacts with 1-deoxy-D-xylulose 5-phosphate; sequence DH. 3-amino-2-oxopropyl phosphate is bound at residue R20. H45 functions as the Proton acceptor in the catalytic mechanism. Residues R47 and H52 each coordinate 1-deoxy-D-xylulose 5-phosphate. E72 acts as the Proton acceptor in catalysis. Position 102 (T102) interacts with 1-deoxy-D-xylulose 5-phosphate. H189 functions as the Proton donor in the catalytic mechanism. 3-amino-2-oxopropyl phosphate is bound by residues G190 and 211-212; that span reads GH.

This sequence belongs to the PNP synthase family. In terms of assembly, homooctamer; tetramer of dimers.

Its subcellular location is the cytoplasm. It carries out the reaction 3-amino-2-oxopropyl phosphate + 1-deoxy-D-xylulose 5-phosphate = pyridoxine 5'-phosphate + phosphate + 2 H2O + H(+). It participates in cofactor biosynthesis; pyridoxine 5'-phosphate biosynthesis; pyridoxine 5'-phosphate from D-erythrose 4-phosphate: step 5/5. Its function is as follows. Catalyzes the complicated ring closure reaction between the two acyclic compounds 1-deoxy-D-xylulose-5-phosphate (DXP) and 3-amino-2-oxopropyl phosphate (1-amino-acetone-3-phosphate or AAP) to form pyridoxine 5'-phosphate (PNP) and inorganic phosphate. The chain is Pyridoxine 5'-phosphate synthase from Ehrlichia ruminantium (strain Welgevonden).